The primary structure comprises 261 residues: Kallikrein 1-related peptidase b26 (261 aa).

Positions 1–18 are cleaved as a signal peptide; sequence MWFLILFPALSLGGIDAA. The propeptide at 19–24 is activation peptide; the sequence is PPLQSR. One can recognise a Peptidase S1 domain in the interval 25-258; that stretch reads VVGGFNCEKN…FNSWIKDTMM (234 aa). 5 disulfides stabilise this stretch: Cys-31–Cys-173, Cys-50–Cys-66, Cys-152–Cys-219, Cys-184–Cys-198, and Cys-209–Cys-234. Catalysis depends on His-65, which acts as the Charge relay system. The N-linked (GlcNAc...) asparagine glycan is linked to Asn-102. Asp-120 (charge relay system) is an active-site residue. Residue Ser-213 is the Charge relay system of the active site.

The protein belongs to the peptidase S1 family. Kallikrein subfamily.

The catalysed reaction is Preferential cleavage of Arg-|-Xaa bonds in small molecule substrates. Highly selective action to release kallidin (lysyl-bradykinin) from kininogen involves hydrolysis of Met-|-Xaa or Leu-|-Xaa.. In terms of biological role, glandular kallikreins cleave Met-Lys and Arg-Ser bonds in kininogen to release Lys-bradykinin. Functionally, prorenin-converting enzyme cleaves mouse REN-2 prorenin at a dibasic site to yield mature renin. The polypeptide is Kallikrein 1-related peptidase b26 (Klk1b26) (Mus musculus (Mouse)).